The following is a 185-amino-acid chain: UPF0397 protein CPF_1836 (185 aa).

Helical transmembrane passes span 11–31 (IVAI…GSLP), 44–64 (AFLA…IGFI), 71–91 (IVFF…VGLI), 111–131 (IFMF…LVAP), and 149–169 (GVIG…ILIA).

This sequence belongs to the UPF0397 family.

Its subcellular location is the cell membrane. The protein is UPF0397 protein CPF_1836 of Clostridium perfringens (strain ATCC 13124 / DSM 756 / JCM 1290 / NCIMB 6125 / NCTC 8237 / Type A).